The primary structure comprises 1145 residues: Protocadherin-19 (1145 aa).

The first 21 residues, 1–21 (MESLLLPVLLLLAVLWTQAAA), serve as a signal peptide directing secretion. Cadherin domains are found at residues 22 to 129 (LINL…APSF), 130 to 238 (PAAQ…NPVF), 239 to 346 (GEST…PPII), 350 to 453 (SVNS…HPHF), 454 to 563 (SKPY…TPVI), and 569 to 672 (INGT…QESM). At 22 to 678 (LINLKYSVEE…QESMGSVNLS (657 aa)) the chain is on the extracellular side. Positions 31, 32, 88, and 90 each coordinate Ca(2+). Cys-93 and Cys-99 are disulfide-bonded. Asp-121, Asn-123, Asp-124, Asn-125, Glu-140, Asp-155, Asp-157, Glu-199, Asp-212, Asp-230, Ser-231, Asn-232, Asp-233, Asn-234, and Glu-249 together coordinate Ca(2+). Asn-261 carries an N-linked (GlcNAc...) asparagine glycan. The Ca(2+) site is built by Asp-264, Asp-266, Asn-270, Asp-305, Glu-307, Asp-338, Asn-340, Asp-341, Asn-342, Glu-360, Asp-375, Asp-377, Asn-381, Asp-412, and Glu-414. A glycan (N-linked (GlcNAc...) asparagine) is linked at Asn-420. Ca(2+) contacts are provided by Asp-427, Asp-445, Glu-446, Asn-447, Asp-448, Asn-449, Glu-464, Asp-479, Asp-481, Asn-485, Asn-522, Glu-524, and Asp-537. N-linked (GlcNAc...) asparagine glycosylation is present at Asn-485. Asn-546 carries an N-linked (GlcNAc...) asparagine glycan. Ca(2+)-binding residues include Asp-555, Val-556, Asn-557, Asp-558, and Asn-559. N-linked (GlcNAc...) asparagine glycosylation is present at Asn-570. Residues Asp-594, Asp-596, Asn-600, and Asp-646 each coordinate Ca(2+). N-linked (GlcNAc...) asparagine glycosylation occurs at Asn-676. Residues 679–699 (LIFIIALGSIAGILFVTMIFV) traverse the membrane as a helical segment. The Cytoplasmic portion of the chain corresponds to 700-1145 (AIKCKRDNKE…SVKRLKDIVL (446 aa)). Disordered regions lie at residues 901 to 921 (GNSL…EHDV) and 1094 to 1145 (LEHH…DIVL). 2 stretches are compositionally biased toward basic and acidic residues: residues 906-921 (DSGH…EHDV) and 1106-1145 (SEAE…DIVL).

Homodimer; antiparallel.

The protein resides in the cell membrane. In terms of biological role, calcium-dependent cell-adhesion protein. This chain is Protocadherin-19 (Pcdh19), found in Mus musculus (Mouse).